The following is a 541-amino-acid chain: Beta-glucuronidase (541 aa).

The first 20 residues, 1-20 (MHHHPITLLSLLLGAAQSIA), serve as a signal peptide directing secretion. 3 N-linked (GlcNAc...) asparagine glycosylation sites follow: Asn69, Asn115, and Asn157. Glu208 (proton donor) is an active-site residue. N-linked (GlcNAc...) asparagine glycans are attached at residues Asn217, Asn291, and Asn304. Residue Glu324 is the Nucleophile of the active site. N-linked (GlcNAc...) asparagine glycosylation is found at Asn380, Asn426, Asn441, Asn483, and Asn512.

Belongs to the glycosyl hydrolase 79 family. Post-translationally, N-glycosylated.

It is found in the secreted. It catalyses the reaction a beta-D-glucuronoside + H2O = D-glucuronate + an alcohol. Beta-glucuronidase that hydrolyzes beta-glucuronosyl and 4-O-methyl-beta-glucuronosyl residues of arabinogalactan-protein. Hydrolyzed heparan sulfate only very weakly. Has no activity on xylan from birchwood. Able to catalyze the transglycosylation of glucuronic acid (GlcA) residues from p-nitrophenyl-beta-glucuronic acid (PNP beta-GlcA) to various monosaccharide acceptors such as glucose, galactose and xylose. The chain is Beta-glucuronidase from Aspergillus niger (strain ATCC MYA-4892 / CBS 513.88 / FGSC A1513).